The primary structure comprises 327 residues: Regulatory protein MsrR (327 aa).

A compositionally biased stretch (basic and acidic residues) spans 1–18 (MDKETNDNEYRRQSEHRT). The tract at residues 1–24 (MDKETNDNEYRRQSEHRTSAPKRK) is disordered. At 1–31 (MDKETNDNEYRRQSEHRTSAPKRKKKKKIRK) the chain is on the cytoplasmic side. Residues 32 to 52 (LPIILLIVVILLIALVVYIVH) traverse the membrane as a helical; Signal-anchor for type II membrane protein segment. The Extracellular segment spans residues 53–327 (SYNSGVEYAK…QAIKDFLDED (275 aa)).

This sequence belongs to the LytR/CpsA/Psr (LCP) family.

It localises to the cell membrane. Its function is as follows. Involved in SarA attenuation. Affects resistance to oxacillin and teicoplanin, as well as the synthesis of virulence factors. This Staphylococcus aureus (strain NCTC 8325 / PS 47) protein is Regulatory protein MsrR (msrR).